The sequence spans 243 residues: 23S rRNA (guanosine-2'-O-)-methyltransferase RlmB (243 aa).

Positions 196, 216, and 225 each coordinate S-adenosyl-L-methionine.

Belongs to the class IV-like SAM-binding methyltransferase superfamily. RNA methyltransferase TrmH family. RlmB subfamily. In terms of assembly, homodimer.

The protein resides in the cytoplasm. The catalysed reaction is guanosine(2251) in 23S rRNA + S-adenosyl-L-methionine = 2'-O-methylguanosine(2251) in 23S rRNA + S-adenosyl-L-homocysteine + H(+). Functionally, specifically methylates the ribose of guanosine 2251 in 23S rRNA. This chain is 23S rRNA (guanosine-2'-O-)-methyltransferase RlmB, found in Salmonella typhimurium (strain LT2 / SGSC1412 / ATCC 700720).